The sequence spans 210 residues: Somatotropin (210 aa).

Positions methionine 1–alanine 22 are cleaved as a signal peptide. Histidine 38 contacts Zn(2+). Cysteine 71 and cysteine 183 are oxidised to a cystine. A Zn(2+)-binding site is contributed by glutamate 192. Cysteines 200 and 208 form a disulfide.

This sequence belongs to the somatotropin/prolactin family.

The protein resides in the secreted. In terms of biological role, growth hormone plays an important role in growth control and is involved in the regulation of several anabolic processes. Implicated as an osmoregulatory substance important for seawater adaptation. The protein is Somatotropin (gh) of Oncorhynchus kisutch (Coho salmon).